The primary structure comprises 1597 residues: MAQFQQTVNMQTLQAAAGRNSLVNDLASRRVYDNAVEELNARSRRPKVHFSKSVSTEQTLLASNAYPEFEISFTHTQQAVHSLAGGLRTLELEYLMMQVPFGSLTYDIGGNFAAHLFKGRDYVHCCMPNLDVRDIARHEGHKEAIFSYLSRLDRQRRPVPEYQRAAFHNYAENPHFVHCDRPFQQCELSTVNRWDTYAIALHSIYDIPADEFGAALLRKNVKICYAAFHFHENMLLDCDSVTLEDIGATFQRAGDKLNFFFHNESTLNYTHSFSNIIKYVCKTFFPASQRYVYHKEFLVTRVNTWYCKFTRVDTFTLFRGVYKTSVDSEEFYKAMDDAWEYKKTLAMLNSERTIFKDSAAINFWFPKVRDMVIIPLFDASITTGRMSRREVLVNKDFVYTVLNHIKTYQAKALTYANVLSFVESIRSRVIINGVTARSEWDTDKAILGPLAMTFFLVTKLSHVQDEIVLKKFQKFDATAKELIWSSLCDALKGVIPSVKETLARGGFVKLAEESLEIKIPELYCTFTDRLVLEYKRTEEFQSCDLSKPLEESEKYYNALSELSVLENLGSFDLDAFKELCQKKNVDPDVAAKVVVAIMNSELTLPFKKPTEEEVAEALSGEVVQDEGLRLSNKAPFPCVSNLKEGLVPACGLCPNGANFDRVDMDISEFHLKSVDAVKKGAMMSAVYTGKIKVQQMKNYVDYLSASLSATVSNLCKVLRDVHGVDPESQEKSGVWDVRRGRWLLKPNAKCHAWGVAEDANHKLVIVLLNWDEGKPVCDETWFRLAVSSDSLVYSDMGKLKTLTSCCRDGEPPEPTAKLVLVDGVPGCGKTKEILEKVNFSEDLVLVPGKEASKMIIRRANQAGITRADKDNVRTVDSFLMHPPKRVFKRLFIDEGLMLHTGCVNFLMLLSHCDVAYVYVDTQQIPFICRVANFPYPAHFAKLVVDEKEDRRVTLRCPADVTYFLNQKYDGSVLCTSSVERSVSAEVVRGKGALNPITLPLEGKILTFTQADKFELLDKGYKDVNTVHEVQGETYEKTAIVRLTATPLEIISRASPHVLVALTRHTTRCKYYTVVLDPMVNVISELGKLSNFLLEMYKVESGTQXQLQIDTVFKGTNLFVPTPKSGDWRDMQFYYDTLLPGNSTILNEFDAVTMNLRDISLNVKDCRIDFSKSVQVPKERPVFMKPKLRTAAEMPRTAGLLENLVAMIKRNMNAPDLTGTIDIEDTASLVVEKFWDAYVVKEFSGTDGMAMTRESFSRWLSKQESSTVGQLADFNFVDLPAVDEYKHMIKSQPKQKLDLSIQDEYPALQTIVYHSKKINAIFGPMFSELTRMLLETIDTSKFLFYTRKTPTQIEEFFSDLDSSQAMEILELDISKYDKSQNEFHCAVEYKIWEKLGIDDWLAEVWRQGHRKTTLKDYTAGIKTCLWYQRKSGDVTTFIGNTIIIAACLSSMIPMDKVIKAAFCGDDSLIYIPKGLDLPDIQAGANLTWNFEAKLFRKKYGYFCGRYVIHHDRGAIVYYDPLKLISKLGCKHIRDEVHLEELRRSLCDVTSNLNNCAYFSQLDEAVAEVHKTAVGGAFVYCSIIKYLSDKRLFKDLFFV.

The region spanning 72–280 (SFTHTQQAVH…HSFSNIIKYV (209 aa)) is the Alphavirus-like MT domain. The (+)RNA virus helicase ATP-binding domain maps to 791–950 (LVYSDMGKLK…KLVVDEKEDR (160 aa)). Residue 823–830 (GVPGCGKT) participates in ATP binding. A (+)RNA virus helicase C-terminal domain is found at 951–1103 (RVTLRCPADV…EMYKVESGTQ (153 aa)). The RdRp catalytic domain maps to 1365–1478 (MEILELDISK…YIPKGLDLPD (114 aa)).

Belongs to the tobamovirus RNA-directed RNA polymerase family. In terms of assembly, heterodimer of a large and a small subunit.

It carries out the reaction RNA(n) + a ribonucleoside 5'-triphosphate = RNA(n+1) + diphosphate. The catalysed reaction is ATP + H2O = ADP + phosphate + H(+). Its function is as follows. The replicase large subunit is an RNA-dependent RNA polymerase active in viral RNA replication. Functionally, the replicase small subunit is a methyltransferase active in RNA capping and an RNA helicase. It also acts as a suppressor of RNA-mediated gene silencing, also known as post-transcriptional gene silencing (PTGS), a mechanism of plant viral defense that limits the accumulation of viral RNAs. May mediate silencing suppression through either inhibition of HEN1-mediated siRNA or siRNA demethylation. The sequence is that of Replicase large subunit from Brassica napus (Rape).